Reading from the N-terminus, the 244-residue chain is Ribonuclease PH (244 aa).

Phosphate contacts are provided by residues Arg-86 and 124-126 (GTR).

Belongs to the RNase PH family. As to quaternary structure, homohexameric ring arranged as a trimer of dimers.

It carries out the reaction tRNA(n+1) + phosphate = tRNA(n) + a ribonucleoside 5'-diphosphate. Its function is as follows. Phosphorolytic 3'-5' exoribonuclease that plays an important role in tRNA 3'-end maturation. Removes nucleotide residues following the 3'-CCA terminus of tRNAs; can also add nucleotides to the ends of RNA molecules by using nucleoside diphosphates as substrates, but this may not be physiologically important. Probably plays a role in initiation of 16S rRNA degradation (leading to ribosome degradation) during starvation. This is Ribonuclease PH from Glaesserella parasuis serovar 5 (strain SH0165) (Haemophilus parasuis).